The following is a 184-amino-acid chain: Peptide deformylase 2 (184 aa).

Fe cation is bound by residues Cys-110 and His-153. Glu-154 is a catalytic residue. His-157 serves as a coordination point for Fe cation.

This sequence belongs to the polypeptide deformylase family. The cofactor is Fe(2+).

The enzyme catalyses N-terminal N-formyl-L-methionyl-[peptide] + H2O = N-terminal L-methionyl-[peptide] + formate. Functionally, removes the formyl group from the N-terminal Met of newly synthesized proteins. Requires at least a dipeptide for an efficient rate of reaction. N-terminal L-methionine is a prerequisite for activity but the enzyme has broad specificity at other positions. The polypeptide is Peptide deformylase 2 (Bacillus cereus (strain ATCC 14579 / DSM 31 / CCUG 7414 / JCM 2152 / NBRC 15305 / NCIMB 9373 / NCTC 2599 / NRRL B-3711)).